The sequence spans 405 residues: Bone morphogenetic protein 4 (405 aa).

A signal peptide spans 1-19 (MIPGNRMLMVILLCQVLLG). Residues 20–291 (GTNHASLIPE…GHALTRRARR (272 aa)) constitute a propeptide that is removed on maturation. N-linked (GlcNAc...) asparagine glycosylation is found at Asn144, Asn208, Asn347, and Asn362. Disulfide bonds link Cys305–Cys370, Cys334–Cys402, and Cys338–Cys404.

The protein belongs to the TGF-beta family. In terms of assembly, homodimer; disulfide-linked. Part of a complex consisting of TWSG1 and CHRD. Forms a ternary complex with chordin/CHRD and TSKU.

The protein localises to the secreted. In terms of biological role, negatively regulates the structure and function of the limb apical ectodermal ridge. This chain is Bone morphogenetic protein 4 (BMP4), found in Gallus gallus (Chicken).